The chain runs to 350 residues: Arginine N-succinyltransferase (350 aa).

Leucine 125 lines the succinyl-CoA pocket. Residue histidine 229 is the Proton donor of the active site.

Belongs to the arginine N-succinyltransferase family.

The catalysed reaction is succinyl-CoA + L-arginine = N(2)-succinyl-L-arginine + CoA + H(+). It participates in amino-acid degradation; L-arginine degradation via AST pathway; L-glutamate and succinate from L-arginine: step 1/5. In terms of biological role, catalyzes the transfer of succinyl-CoA to arginine to produce N(2)-succinylarginine. This Yersinia pestis protein is Arginine N-succinyltransferase.